Here is a 233-residue protein sequence, read N- to C-terminus: MALRTLASKNALSFALGGAARPSAESARGVTTVALPDLSYDFGALEPVISGEIMRLHHQKNHATYVVNYNKALEQIDDVVVKGDDSAVVQLQGAIKFNGGGHVNHSIFWKNLKPISEGGGEPPHGKLGWAIDEDFGSFEALVKRMNAEGAALQGSGWVWLALDKEAKKVSVETTANQDPLVTKGASLVPLLGIDVWEHAYYLQYKNVRPDYLNNIWKVMNWKYAGEVYENVLA.

The N-terminal 29 residues, 1-29 (MALRTLASKNALSFALGGAARPSAESARG), are a transit peptide targeting the mitochondrion. Residues His-57, His-105, Asp-194, and His-198 each coordinate Mn(2+).

This sequence belongs to the iron/manganese superoxide dismutase family. In terms of assembly, homotetramer. Mn(2+) is required as a cofactor. As to expression, predominantly expressed in the embryo late in embryogenesis.

Its subcellular location is the mitochondrion matrix. The enzyme catalyses 2 superoxide + 2 H(+) = H2O2 + O2. In terms of biological role, destroys superoxide anion radicals which are normally produced within the cells and which are toxic to biological systems. In Zea mays (Maize), this protein is Superoxide dismutase [Mn] 3.3, mitochondrial (SODA.2).